Consider the following 182-residue polypeptide: Probable inosine/xanthosine triphosphatase (182 aa).

The Mg(2+) site is built by Glu42 and Asp69.

This sequence belongs to the YjjX NTPase family. In terms of assembly, homodimer. The cofactor is Mg(2+). Mn(2+) is required as a cofactor.

It carries out the reaction XTP + H2O = XDP + phosphate + H(+). It catalyses the reaction ITP + H2O = IDP + phosphate + H(+). Its function is as follows. Phosphatase that hydrolyzes non-canonical purine nucleotides such as XTP and ITP to their respective diphosphate derivatives. Probably excludes non-canonical purines from DNA/RNA precursor pool, thus preventing their incorporation into DNA/RNA and avoiding chromosomal lesions. This is Probable inosine/xanthosine triphosphatase from Methanothermobacter thermautotrophicus (strain ATCC 29096 / DSM 1053 / JCM 10044 / NBRC 100330 / Delta H) (Methanobacterium thermoautotrophicum).